The sequence spans 392 residues: Formate-dependent phosphoribosylglycinamide formyltransferase (392 aa).

Residues 12-13 (EL) and glutamate 72 each bind N(1)-(5-phospho-beta-D-ribosyl)glycinamide. ATP-binding positions include arginine 104, lysine 145, 150–155 (SSGKGQ), 185–188 (EAFV), and glutamate 193. Residues 109-300 (DLAARDLGLR…EFELHARAVL (192 aa)) enclose the ATP-grasp domain. Glutamate 258 and glutamate 270 together coordinate Mg(2+). Residues aspartate 277, lysine 348, and 355–356 (RR) contribute to the N(1)-(5-phospho-beta-D-ribosyl)glycinamide site.

This sequence belongs to the PurK/PurT family. As to quaternary structure, homodimer.

The catalysed reaction is N(1)-(5-phospho-beta-D-ribosyl)glycinamide + formate + ATP = N(2)-formyl-N(1)-(5-phospho-beta-D-ribosyl)glycinamide + ADP + phosphate + H(+). The protein operates within purine metabolism; IMP biosynthesis via de novo pathway; N(2)-formyl-N(1)-(5-phospho-D-ribosyl)glycinamide from N(1)-(5-phospho-D-ribosyl)glycinamide (formate route): step 1/1. Functionally, involved in the de novo purine biosynthesis. Catalyzes the transfer of formate to 5-phospho-ribosyl-glycinamide (GAR), producing 5-phospho-ribosyl-N-formylglycinamide (FGAR). Formate is provided by PurU via hydrolysis of 10-formyl-tetrahydrofolate. In Chlorobaculum tepidum (strain ATCC 49652 / DSM 12025 / NBRC 103806 / TLS) (Chlorobium tepidum), this protein is Formate-dependent phosphoribosylglycinamide formyltransferase.